Consider the following 1892-residue polypeptide: Protein TIC 214 (1892 aa).

6 helical membrane passes run 12–32 (LISLYMTIINSVVMVGLYYGF), 68–88 (FIAGQLMMFISIYYVPLHLAL), 89–109 (GKPHTITVLALPYLLFHFFWN), 128–148 (LSIQCVFLNNLIIQLFNHFIL), 176–196 (VGWLIGHILLMKWVGLVLVWI), and 225–245 (IFSILLFITCVYYLGRIPSPI). Residues 256–266 (PEEVGESEEER) show a composition bias toward acidic residues. Residues 256-299 (PEEVGESEEERNIEIETISEGGGANQKQGTEENTSSSLFSEEEV) form a disordered region. Positions 280–294 (NQKQGTEENTSSSLF) are enriched in polar residues. A helical membrane pass occupies residues 1115–1135 (FYFFINFFIEKIYMDILLYII). A disordered region spans residues 1613 to 1636 (SNQEKDVEEDYDKSDKKKRRKKKQ).

The protein belongs to the TIC214 family. Part of the Tic complex.

It is found in the plastid. Its subcellular location is the chloroplast inner membrane. Its function is as follows. Involved in protein precursor import into chloroplasts. May be part of an intermediate translocation complex acting as a protein-conducting channel at the inner envelope. The sequence is that of Protein TIC 214 from Gossypium hirsutum (Upland cotton).